The primary structure comprises 853 residues: E3 ubiquitin-protein ligase RNF216 (853 aa).

Disordered stretches follow at residues 33-102, 125-152, and 165-228; these read TISD…DDIV, PLEVQNQSSEDSETELLSNPGEPAASVD, and PYFQ…AHPL. A compositionally biased stretch (acidic residues) spans 53-73; the sequence is QQEDDLDDDVILTEDDSEDEY. K89 is covalently cross-linked (Glycyl lysine isopeptide (Lys-Gly) (interchain with G-Cter in SUMO2)). Glycyl lysine isopeptide (Lys-Gly) (interchain with G-Cter in SUMO2) cross-links involve residues K339 and K342. S407 is subject to Phosphoserine. Residues K413, K418, K436, K447, and K473 each participate in a glycyl lysine isopeptide (Lys-Gly) (interchain with G-Cter in SUMO2) cross-link. A coiled-coil region spans residues 463 to 479; that stretch reads VKQEQEFYEQKIKEMAE. The segment at 499–716 is TRIAD supradomain; it reads QLIECRCCYG…SPGAPCQECS (218 aa). 6 residues coordinate Zn(2+): C503, C506, C525, C528, C593, and C596. The segment at 503–552 adopts an RING-type 1 zinc-finger fold; the sequence is CRCCYGEFPFEELTQCADAHLFCKECLIRYAQEAVFGSGKSELSCMEGSC. Residues 571 to 636 form an IBR-type zinc finger; sequence YKYYERKAEE…LWKEHNGLTC (66 aa). Residue K607 forms a Glycyl lysine isopeptide (Lys-Gly) (interchain with G-Cter in SUMO2) linkage. Zn(2+) is bound by residues C611, C616, C621, C624, H631, and C636. Residues K646 and K654 each participate in a glycyl lysine isopeptide (Lys-Gly) (interchain with G-Cter in SUMO2) cross-link. Residues C663 and C666 each contribute to the Zn(2+) site. An RING-type 2; atypical zinc finger spans residues 663 to 691; that stretch reads CHKCGTGLIKSEGCNRMSCRCGAQMCYLC. C676 is an active-site residue. C681, C683, C688, C691, H704, and C712 together coordinate Zn(2+). Residues 725–751 are a coiled coil; it reads TEDDEKLIEEIQKEAEEEQKRKNGENT. Residues K753 and K761 each participate in a glycyl lysine isopeptide (Lys-Gly) (interchain with G-Cter in SUMO2) cross-link.

In terms of assembly, interacts with UBE2L3 and to some extent with UBE2L6. Interacts with TRAF3, TLR3, TLR4, TLR5 and TLR9. Isoform 3/ZIN binds RIPK1. Post-translationally, auto-ubiquitinated. Phosphorylation at Ser-719 enhances acceptor ubiquitin binding and chain-type specificity towards 'Lys-63' di-ubiquitin but not di-ubiquitin with other linkage types.

The protein resides in the cytoplasm. The protein localises to the cytoplasmic vesicle. It localises to the clathrin-coated vesicle. It catalyses the reaction S-ubiquitinyl-[E2 ubiquitin-conjugating enzyme]-L-cysteine + [acceptor protein]-L-lysine = [E2 ubiquitin-conjugating enzyme]-L-cysteine + N(6)-ubiquitinyl-[acceptor protein]-L-lysine.. It functions in the pathway protein modification; protein ubiquitination. With respect to regulation, allosterically activated by 'Lys-63'-linked di-ubiquitin. Its function is as follows. E3 ubiquitin ligase which accepts ubiquitin from specific E2 ubiquitin-conjugating enzymes, and then transfers it to substrates promoting their ubiquitination. Plays a role in the regulation of antiviral responses by promoting the degradation of TRAF3, TLR4 and TLR9. In turn, down-regulates NF-kappa-B and IRF3 activation as well as beta interferon production. Also participates in the regulation of autophagy by ubiquitinating BECN1 leading to its degradation and autophagy inhibition. Plays a role in ARC-dependent synaptic plasticity by mediating ARC ubiquitination resulting in its rapid proteasomal degradation. Plays aso an essential role in spermatogenesis and male fertility. Mechanistically, regulates meiosis by promoting the degradation of PRKACB through the ubiquitin-mediated lysosome pathway. Modulates the gonadotropin-releasing hormone signal pathway by affecting the stability of STAU2 that is required for the microtubule-dependent transport of neuronal RNA from the cell body to the dendrite. The protein is E3 ubiquitin-protein ligase RNF216 (Rnf216) of Mus musculus (Mouse).